The sequence spans 569 residues: Cryptochrome DASH, chloroplastic/mitochondrial (569 aa).

The Photolyase/cryptochrome alpha/beta domain maps to 84-221 (GVTILWFRND…KLELIWGSTM (138 aa)). FAD is bound by residues tyrosine 316 and 329–333 (STKFS). Arginine 436 contacts ATP. The FAD site is built by aspartate 466 and aspartate 468. Aspartate 485 is a binding site for ATP. Residues 541–569 (GNGPMAGGSKSGGGFRGSHSGRRSRHNGP) are disordered. Over residues 544 to 556 (PMAGGSKSGGGFR) the composition is skewed to gly residues. Residues 559 to 569 (HSGRRSRHNGP) show a composition bias toward basic residues.

The protein belongs to the DNA photolyase class-1 family. Homodimer. Requires FAD as cofactor. It depends on (6R)-5,10-methylene-5,6,7,8-tetrahydrofolate as a cofactor.

The protein resides in the plastid. Its subcellular location is the chloroplast. It localises to the mitochondrion. May have a photoreceptor function. Binds ss- and ds-DNA in a sequence non-specific manner. Has a photolyase activity specific for cyclobutane pyrimidine dimers in ssDNA. This Arabidopsis thaliana (Mouse-ear cress) protein is Cryptochrome DASH, chloroplastic/mitochondrial (CRYD).